The primary structure comprises 474 residues: Gamma-aminobutyric acid receptor subunit beta-1 (474 aa).

The N-terminal stretch at 1 to 25 is a signal peptide; sequence MWTVQNRESLGLLSFPVMVAMVCCA. The Extracellular segment spans residues 26–245; it reads HSSNEPSNMS…SFRLKRNIGY (220 aa). Asn33 and Asn105 each carry an N-linked (GlcNAc...) asparagine glycan. Tyr122 is a histamine binding site. Cys161 and Cys175 form a disulfide bridge. N-linked (GlcNAc...) asparagine glycosylation occurs at Asn174. Residues 181 to 182 and Thr227 each bind histamine; that span reads SY. 2 residues coordinate 4-aminobutanoate: Tyr182 and Thr227. The next 3 membrane-spanning stretches (helical) occupy residues 246–267, 271–293, and 305–327; these read FILQ…SFWI, ASAA…STHL, and AIDI…YAFV. The Cytoplasmic portion of the chain corresponds to 328–451; that stretch reads NYIFFGKGPQ…DLTDVNSIDK (124 aa). A helical transmembrane segment spans residues 452-473; the sequence is WSRMFFPITFSLFNVVYWLYYV.

It belongs to the ligand-gated ion channel (TC 1.A.9) family. Gamma-aminobutyric acid receptor (TC 1.A.9.5) subfamily. GABRB1 sub-subfamily. In terms of assembly, heteropentamer, formed by a combination of alpha (GABRA1-6), beta (GABRB1-3), gamma (GABRG1-3), delta (GABRD), epsilon (GABRE), rho (GABRR1-3), pi (GABRP) and theta (GABRQ) chains, each subunit exhibiting distinct physiological and pharmacological properties. Binds UBQLN1.

Its subcellular location is the postsynaptic cell membrane. The protein localises to the cell membrane. The enzyme catalyses chloride(in) = chloride(out). Potentiated by histamine. In terms of biological role, beta subunit of the heteropentameric ligand-gated chloride channel gated by gamma-aminobutyric acid (GABA), a major inhibitory neurotransmitter in the brain. GABA-gated chloride channels, also named GABA(A) receptors (GABAAR), consist of five subunits arranged around a central pore and contain GABA active binding site(s) located at the alpha and beta subunit interface(s). When activated by GABA, GABAARs selectively allow the flow of chloride anions across the cell membrane down their electrochemical gradient. Chloride influx into the postsynaptic neuron following GABAAR opening decreases the neuron ability to generate a new action potential, thereby reducing nerve transmission. Beta-containing GABAARs can simultaneously bind GABA and histamine where histamine binds at the interface of two neighboring beta subunits, which may be involved in the regulation of sleep and wakefulness. The protein is Gamma-aminobutyric acid receptor subunit beta-1 of Mus musculus (Mouse).